A 242-amino-acid polypeptide reads, in one-letter code: Ubiquinone biosynthesis O-methyltransferase (242 aa).

The S-adenosyl-L-methionine site is built by Arg-44, Gly-64, Asp-85, and Met-129.

Belongs to the methyltransferase superfamily. UbiG/COQ3 family.

The catalysed reaction is a 3-demethylubiquinol + S-adenosyl-L-methionine = a ubiquinol + S-adenosyl-L-homocysteine + H(+). It catalyses the reaction a 3-(all-trans-polyprenyl)benzene-1,2-diol + S-adenosyl-L-methionine = a 2-methoxy-6-(all-trans-polyprenyl)phenol + S-adenosyl-L-homocysteine + H(+). Its pathway is cofactor biosynthesis; ubiquinone biosynthesis. O-methyltransferase that catalyzes the 2 O-methylation steps in the ubiquinone biosynthetic pathway. The sequence is that of Ubiquinone biosynthesis O-methyltransferase from Klebsiella pneumoniae (strain 342).